Consider the following 332-residue polypeptide: DNA-directed RNA polymerase subunit alpha (332 aa).

An alpha N-terminal domain (alpha-NTD) region spans residues 1 to 244 (MKKHAKVYYS…AHLNLLADVE (244 aa)). Residues 259 to 332 (IKEEPIRRFS…NYKNENKGEN (74 aa)) are alpha C-terminal domain (alpha-CTD).

This sequence belongs to the RNA polymerase alpha chain family. As to quaternary structure, homodimer. The RNAP catalytic core consists of 2 alpha, 1 beta, 1 beta' and 1 omega subunit. When a sigma factor is associated with the core the holoenzyme is formed, which can initiate transcription.

It carries out the reaction RNA(n) + a ribonucleoside 5'-triphosphate = RNA(n+1) + diphosphate. In terms of biological role, DNA-dependent RNA polymerase catalyzes the transcription of DNA into RNA using the four ribonucleoside triphosphates as substrates. In Mesomycoplasma hyopneumoniae (strain 232) (Mycoplasma hyopneumoniae), this protein is DNA-directed RNA polymerase subunit alpha.